The chain runs to 190 residues: RNA pyrophosphohydrolase (190 aa).

In terms of domain architecture, Nudix hydrolase spans glycine 6–asparagine 149. The short motif at glycine 38 to glycine 59 is the Nudix box element. Residues glutamine 167 to glycine 190 form a disordered region.

It belongs to the Nudix hydrolase family. RppH subfamily. Requires a divalent metal cation as cofactor.

Accelerates the degradation of transcripts by removing pyrophosphate from the 5'-end of triphosphorylated RNA, leading to a more labile monophosphorylated state that can stimulate subsequent ribonuclease cleavage. The protein is RNA pyrophosphohydrolase of Bordetella pertussis (strain Tohama I / ATCC BAA-589 / NCTC 13251).